A 393-amino-acid polypeptide reads, in one-letter code: Branched-chain-amino-acid aminotransferase, mitochondrial (393 aa).

The N-terminal 27 residues, 1-27 (MSAAILGQVWTRKLLPIPWRLCVPGRC), are a transit peptide targeting the mitochondrion. Residue tyrosine 169 coordinates substrate. Lysine 230 carries the post-translational modification N6-(pyridoxal phosphate)lysine. Lysine 322 carries the post-translational modification N6-acetyllysine.

Belongs to the class-IV pyridoxal-phosphate-dependent aminotransferase family. As to quaternary structure, homodimer. Requires pyridoxal 5'-phosphate as cofactor. In terms of tissue distribution, expressed in all tissues.

It localises to the mitochondrion. It catalyses the reaction L-leucine + 2-oxoglutarate = 4-methyl-2-oxopentanoate + L-glutamate. The catalysed reaction is L-isoleucine + 2-oxoglutarate = (S)-3-methyl-2-oxopentanoate + L-glutamate. It carries out the reaction L-valine + 2-oxoglutarate = 3-methyl-2-oxobutanoate + L-glutamate. Functionally, catalyzes the first reaction in the catabolism of the essential branched chain amino acids leucine, isoleucine, and valine. May also function as a transporter of branched chain alpha-keto acids. In Rattus norvegicus (Rat), this protein is Branched-chain-amino-acid aminotransferase, mitochondrial (Bcat2).